We begin with the raw amino-acid sequence, 402 residues long: Protein FAM53A (402 aa).

Phosphoserine is present on serine 119. A disordered region spans residues 170–215 (LVPGLPRRPVSPAGPTSPLTPRPASASSGFVDGSEGSTSSGPPWLS). The Nuclear localization signal motif lies at 273-281 (RRVRRKRRR). A phosphoserine mark is found at serine 306 and serine 309. Polar residues predominate over residues 323–333 (TLVSSPCNSQG). The tract at residues 323–402 (TLVSSPCNSQ…DLDLEQIENN (80 aa)) is disordered. A compositionally biased stretch (low complexity) spans 336–345 (GIITPSSSPR).

The protein belongs to the FAM53 family.

It localises to the nucleus. Functionally, may play an important role in neural development; the dorsomedial roof of the third ventricle. This Mus musculus (Mouse) protein is Protein FAM53A.